The chain runs to 361 residues: Riboflavin biosynthesis protein RibD (361 aa).

A CMP/dCMP-type deaminase domain is found at 1-122 (MEEYYMKLAL…MMKEAGIEVR (122 aa)). The interval 1–144 (MEEYYMKLAL…EKFLHFMRTG (144 aa)) is deaminase. Residue His49 participates in Zn(2+) binding. The active-site Proton donor is Glu51. Cys74 and Cys83 together coordinate Zn(2+). The interval 145-361 (LPYVTLKAAA…IKLTAKPTKE (217 aa)) is reductase. Residue Ala153 participates in NADP(+) binding. Ser167 contacts substrate. Trp169 is a binding site for NADP(+). Arg183 is a substrate binding site. Thr195 and Asp199 together coordinate NADP(+). Substrate is bound by residues Leu203 and Arg206. Residue Thr221 participates in NADP(+) binding. Glu290 contacts substrate. 292–298 (GSAVHGS) contributes to the NADP(+) binding site.

This sequence in the N-terminal section; belongs to the cytidine and deoxycytidylate deaminase family. In the C-terminal section; belongs to the HTP reductase family. As to quaternary structure, homotetramer. Requires Zn(2+) as cofactor.

It catalyses the reaction 2,5-diamino-6-hydroxy-4-(5-phosphoribosylamino)-pyrimidine + H2O + H(+) = 5-amino-6-(5-phospho-D-ribosylamino)uracil + NH4(+). It carries out the reaction 5-amino-6-(5-phospho-D-ribitylamino)uracil + NADP(+) = 5-amino-6-(5-phospho-D-ribosylamino)uracil + NADPH + H(+). It participates in cofactor biosynthesis; riboflavin biosynthesis; 5-amino-6-(D-ribitylamino)uracil from GTP: step 2/4. The protein operates within cofactor biosynthesis; riboflavin biosynthesis; 5-amino-6-(D-ribitylamino)uracil from GTP: step 3/4. Functionally, converts 2,5-diamino-6-(ribosylamino)-4(3h)-pyrimidinone 5'-phosphate into 5-amino-6-(ribosylamino)-2,4(1h,3h)-pyrimidinedione 5'-phosphate. In Bacillus subtilis (strain 168), this protein is Riboflavin biosynthesis protein RibD (ribD).